A 133-amino-acid polypeptide reads, in one-letter code: ATP synthase epsilon chain (133 aa).

Belongs to the ATPase epsilon chain family. In terms of assembly, F-type ATPases have 2 components, CF(1) - the catalytic core - and CF(0) - the membrane proton channel. CF(1) has five subunits: alpha(3), beta(3), gamma(1), delta(1), epsilon(1). CF(0) has three main subunits: a, b and c.

The protein resides in the cell membrane. Its function is as follows. Produces ATP from ADP in the presence of a proton gradient across the membrane. This is ATP synthase epsilon chain from Clostridium botulinum (strain 657 / Type Ba4).